We begin with the raw amino-acid sequence, 181 residues long: UPF0177 protein YbdI (181 aa).

A run of 5 helical transmembrane segments spans residues Ile-10–Ala-30, Leu-41–Leu-61, Phe-81–Ile-101, Phe-114–Thr-134, and Ser-161–Ile-181.

It belongs to the UPF0177 family.

Its subcellular location is the cell membrane. This Lactococcus lactis subsp. lactis (strain IL1403) (Streptococcus lactis) protein is UPF0177 protein YbdI (ybdI).